The following is an 81-amino-acid chain: Insulin (81 aa).

Intrachain disulfides connect C7–C67, C19–C80, and C66–C71. The propeptide at 33-58 (DVEQPLVNGPLHGEVGELPFQHEEYQ) is c peptide.

This sequence belongs to the insulin family. As to quaternary structure, heterodimer of a B chain and an A chain linked by two disulfide bonds.

Its subcellular location is the secreted. Its function is as follows. Insulin decreases blood glucose concentration. It increases cell permeability to monosaccharides, amino acids and fatty acids. It accelerates glycolysis, the pentose phosphate cycle, and glycogen synthesis in liver. In Anas platyrhynchos (Mallard), this protein is Insulin (INS).